Consider the following 84-residue polypeptide: Small ribosomal subunit protein bS18 (84 aa).

This sequence belongs to the bacterial ribosomal protein bS18 family. Part of the 30S ribosomal subunit. Forms a tight heterodimer with protein bS6.

In terms of biological role, binds as a heterodimer with protein bS6 to the central domain of the 16S rRNA, where it helps stabilize the platform of the 30S subunit. This chain is Small ribosomal subunit protein bS18, found in Mycobacterium leprae (strain Br4923).